The following is a 416-amino-acid chain: Gamma-glutamyl phosphate reductase (416 aa).

Belongs to the gamma-glutamyl phosphate reductase family.

It is found in the cytoplasm. It carries out the reaction L-glutamate 5-semialdehyde + phosphate + NADP(+) = L-glutamyl 5-phosphate + NADPH + H(+). The protein operates within amino-acid biosynthesis; L-proline biosynthesis; L-glutamate 5-semialdehyde from L-glutamate: step 2/2. Its function is as follows. Catalyzes the NADPH-dependent reduction of L-glutamate 5-phosphate into L-glutamate 5-semialdehyde and phosphate. The product spontaneously undergoes cyclization to form 1-pyrroline-5-carboxylate. The polypeptide is Gamma-glutamyl phosphate reductase (Salmonella arizonae (strain ATCC BAA-731 / CDC346-86 / RSK2980)).